Reading from the N-terminus, the 310-residue chain is Malate dehydrogenase (310 aa).

Residues Gly7–Gly13 and Asp34 each bind NAD(+). Substrate contacts are provided by Arg81 and Arg87. NAD(+) is bound by residues Asn94 and Ile117–Asn119. Substrate contacts are provided by Asn119 and Arg153. The active-site Proton acceptor is the His177. Residue Met227 participates in NAD(+) binding.

Belongs to the LDH/MDH superfamily. MDH type 1 family. In terms of assembly, homodimer.

It carries out the reaction (S)-malate + NAD(+) = oxaloacetate + NADH + H(+). Its function is as follows. Catalyzes the reversible oxidation of malate to oxaloacetate. The protein is Malate dehydrogenase of Vibrio vulnificus (strain CMCP6).